The sequence spans 345 residues: L-erythro-3,5-diaminohexanoate dehydrogenase (345 aa).

Belongs to the KDD family. In terms of assembly, homodimer.

The enzyme catalyses (3S,5S)-3,5-diaminohexanoate + NAD(+) + H2O = (5S)-5-amino-3-oxohexanoate + NH4(+) + NADH + H(+). It functions in the pathway amino-acid degradation; L-lysine degradation via acetate pathway. Involved in the anaerobic fermentation of lysine. Catalyzes the oxidative deamination of L-erythro-3,5-diaminohexanoate (3,5-DAH) to 3-keto-5-aminohexanoate (KAH). It can use NAD or NADP. This chain is L-erythro-3,5-diaminohexanoate dehydrogenase, found in Fusobacterium nucleatum subsp. nucleatum (strain ATCC 25586 / DSM 15643 / BCRC 10681 / CIP 101130 / JCM 8532 / KCTC 2640 / LMG 13131 / VPI 4355).